A 420-amino-acid polypeptide reads, in one-letter code: Light-independent protochlorophyllide reductase subunit N (420 aa).

Residues C21, C46, and C103 each coordinate [4Fe-4S] cluster.

This sequence belongs to the BchN/ChlN family. In terms of assembly, protochlorophyllide reductase is composed of three subunits; BchL, BchN and BchB. Forms a heterotetramer of two BchB and two BchN subunits. [4Fe-4S] cluster serves as cofactor.

It carries out the reaction chlorophyllide a + oxidized 2[4Fe-4S]-[ferredoxin] + 2 ADP + 2 phosphate = protochlorophyllide a + reduced 2[4Fe-4S]-[ferredoxin] + 2 ATP + 2 H2O. It participates in porphyrin-containing compound metabolism; bacteriochlorophyll biosynthesis (light-independent). Component of the dark-operative protochlorophyllide reductase (DPOR) that uses Mg-ATP and reduced ferredoxin to reduce ring D of protochlorophyllide (Pchlide) to form chlorophyllide a (Chlide). This reaction is light-independent. The NB-protein (BchN-BchB) is the catalytic component of the complex. This is Light-independent protochlorophyllide reductase subunit N from Chlorobium phaeobacteroides (strain DSM 266 / SMG 266 / 2430).